The primary structure comprises 412 residues: MESIRRNSRKEGIKERIFLTIGLLVLSRLGTFIPVPGVDHDAFYQSISTNPIVTFLNIFSGGGFASIGIFALGIVPYINASIVIQLATTSIPNLEKLQKEEGEAGRQKISQITRYRALGWAAIQSLGVSFWVRPYVFNWDSQFVVQMTLALTTGSMLIMWFSEQITEKGIGNGPSLLIFINIIAGLPKLIQQKSNAISSTNQTTELVVLASISVYDSRIFIRDRRYYILQTVGRHCKQTSYLPLRLNQGGVMPIIFASAILVLPAYLGQVIQNQFVLKLVTLLSPNSSDKNLYLIFYFSLILFFSYFYASLIINPNDVSQNLKKMESSIPGVRPGKATTDYLQKTLNRLTFLGALFLAFIAVVPSIIENITSISTFKGLGATSLLILVGVAIDTSRQIQTYLISRNYENIMK.

The next 9 membrane-spanning stretches (helical) occupy residues 17-37 (IFLT…PVPG), 58-78 (IFSG…VPYI), 117-137 (ALGW…PYVF), 143-163 (FVVQ…WFSE), 170-190 (IGNG…PKLI), 251-271 (VMPI…GQVI), 293-313 (YLIF…SLII), 350-370 (TFLG…IENI), and 372-392 (SIST…GVAI).

Belongs to the SecY/SEC61-alpha family. As to quaternary structure, component of the plastid Sec protein translocase complex, which is composed of at least SecY and SecE.

The protein localises to the plastid. The protein resides in the chloroplast thylakoid membrane. Functionally, the central subunit of the protein translocation channel SecYE. Consists of two halves formed by TMs 1-5 and 6-10. These two domains form a lateral gate at the front which open onto the bilayer between TMs 2 and 7, and are clamped together by SecE at the back. The channel is closed by both a pore ring composed of hydrophobic SecY resides and a short helix (helix 2A) on the extracellular side of the membrane which forms a plug. The protein is Protein translocase subunit SecY of Pyrenomonas salina.